The sequence spans 396 residues: S-adenosylmethionine synthase 3 (396 aa).

Glutamate 12 contributes to the Mg(2+) binding site. Position 18 (histidine 18) interacts with ATP. Glutamate 46 contributes to the K(+) binding site. Residues glutamate 59 and glutamine 102 each coordinate L-methionine. ATP contacts are provided by residues 170–172, 238–241, aspartate 249, 255–256, alanine 272, lysine 276, and lysine 280; these read DGK, SGRF, and RK. Aspartate 249 is an L-methionine binding site. Lysine 280 contributes to the L-methionine binding site.

It belongs to the AdoMet synthase family. As to quaternary structure, homotetramer. Requires Mn(2+) as cofactor. Mg(2+) is required as a cofactor. Co(2+) serves as cofactor. It depends on K(+) as a cofactor.

Its subcellular location is the cytoplasm. The enzyme catalyses L-methionine + ATP + H2O = S-adenosyl-L-methionine + phosphate + diphosphate. Its pathway is amino-acid biosynthesis; S-adenosyl-L-methionine biosynthesis; S-adenosyl-L-methionine from L-methionine: step 1/1. In terms of biological role, catalyzes the formation of S-adenosylmethionine from methionine and ATP. The reaction comprises two steps that are both catalyzed by the same enzyme: formation of S-adenosylmethionine (AdoMet) and triphosphate, and subsequent hydrolysis of the triphosphate. The protein is S-adenosylmethionine synthase 3 (METK3) of Oryza sativa subsp. japonica (Rice).